The sequence spans 341 residues: Galactofuranose transporter permease protein YtfT (341 aa).

At 1 to 25 the chain is on the cytoplasmic side; sequence MMPQSLPDTTTPKRRFRWPTGMPQL. A helical transmembrane segment spans residues 26–46; it reads VALLLVLLVDSLVAPHFWQVV. At 47–65 the chain is on the periplasmic side; sequence LQDGRLFGSPIDILNRAAP. The next 2 helical transmembrane spans lie at 66–86 and 87–107; these read VALL…DLSV and GAVM…GFSL. Position 108 (proline 108) is a topological domain, periplasmic. Residues 109–129 traverse the membrane as a helical segment; the sequence is IVLLSALGTGILAGLWNGILV. At 130 to 136 the chain is on the cytoplasmic side; it reads AILKIQP. The chain crosses the membrane as a helical span at residues 137–157; that stretch reads FVATLILMVAGRGVAQLITAG. Residues 158 to 174 are Periplasmic-facing; that stretch reads QIVTFNSPDLSWFGSGS. A helical transmembrane segment spans residues 175–195; the sequence is LLFLPTPVIIAVLTLILFWLL. The Cytoplasmic portion of the chain corresponds to 196–223; that stretch reads TRKTALGMFIEAVGINIRAAKNAGVNTR. A helical membrane pass occupies residues 224 to 244; the sequence is IIVMLTYVLSGLCAAIAGIIV. At 245 to 255 the chain is on the periplasmic side; sequence AADIRGADANN. The chain crosses the membrane as a helical span at residues 256 to 276; sequence AGLWLELDAILAVVIGGGSLM. At 277–281 the chain is on the cytoplasmic side; it reads GGRFN. 2 helical membrane passes run 282–302 and 303–323; these read LLLS…ILLS and GFPP…VLIV. Topologically, residues 324–341 are cytoplasmic; sequence QSQRFISLIKGVRSRDKT.

The protein belongs to the binding-protein-dependent transport system permease family. AraH/RbsC subfamily. In terms of assembly, the complex is composed of two ATP-binding proteins (YtfR), two transmembrane proteins (YtfT and YjfF) and a solute-binding protein (YtfQ).

The protein localises to the cell inner membrane. Functionally, part of the ABC transporter complex YtfQRT-YjfF involved in galactofuranose transport. Probably responsible for the translocation of the substrate across the membrane. This is Galactofuranose transporter permease protein YtfT (ytfT) from Escherichia coli (strain K12).